The following is a 227-amino-acid chain: Peroxiredoxin 1 (227 aa).

Residues 6–161 (PLIGEKFPEM…ILRLIKSLQM (156 aa)) form the Thioredoxin domain. The active-site Cysteine sulfenic acid (-SOH) intermediate is Cys48. Arg124 provides a ligand contact to substrate.

The protein belongs to the peroxiredoxin family. Prx6 subfamily. As to quaternary structure, homodecamer. Pentamer of dimers that assemble into a ring structure.

It localises to the cytoplasm. The catalysed reaction is a hydroperoxide + [thioredoxin]-dithiol = an alcohol + [thioredoxin]-disulfide + H2O. Functionally, thiol-specific peroxidase that catalyzes the reduction of hydrogen peroxide and organic hydroperoxides to water and alcohols, respectively. Plays a role in cell protection against oxidative stress by detoxifying peroxides. The polypeptide is Peroxiredoxin 1 (Picrophilus torridus (strain ATCC 700027 / DSM 9790 / JCM 10055 / NBRC 100828 / KAW 2/3)).